The primary structure comprises 313 residues: Beta-ketoacyl-[acyl-carrier-protein] synthase III (313 aa).

Active-site residues include Cys112 and His238. An ACP-binding region spans residues Gln239–Arg243. The active site involves Asn268.

This sequence belongs to the thiolase-like superfamily. FabH family. Homodimer.

It localises to the cytoplasm. It catalyses the reaction malonyl-[ACP] + acetyl-CoA + H(+) = 3-oxobutanoyl-[ACP] + CO2 + CoA. It functions in the pathway lipid metabolism; fatty acid biosynthesis. Functionally, catalyzes the condensation reaction of fatty acid synthesis by the addition to an acyl acceptor of two carbons from malonyl-ACP. Catalyzes the first condensation reaction which initiates fatty acid synthesis and may therefore play a role in governing the total rate of fatty acid production. Possesses both acetoacetyl-ACP synthase and acetyl transacylase activities. Its substrate specificity determines the biosynthesis of branched-chain and/or straight-chain of fatty acids. This Staphylococcus epidermidis (strain ATCC 35984 / DSM 28319 / BCRC 17069 / CCUG 31568 / BM 3577 / RP62A) protein is Beta-ketoacyl-[acyl-carrier-protein] synthase III.